The primary structure comprises 330 residues: Aspartate--ammonia ligase (330 aa).

The protein belongs to the class-II aminoacyl-tRNA synthetase family. AsnA subfamily.

It is found in the cytoplasm. It catalyses the reaction L-aspartate + NH4(+) + ATP = L-asparagine + AMP + diphosphate + H(+). It participates in amino-acid biosynthesis; L-asparagine biosynthesis; L-asparagine from L-aspartate (ammonia route): step 1/1. The sequence is that of Aspartate--ammonia ligase from Streptococcus thermophilus (strain ATCC BAA-250 / LMG 18311).